The chain runs to 353 residues: UDP-N-acetylglucosamine--N-acetylmuramyl-(pentapeptide) pyrophosphoryl-undecaprenol N-acetylglucosamine transferase (353 aa).

UDP-N-acetyl-alpha-D-glucosamine-binding positions include 10–12, asparagine 124, serine 183, and glutamine 283; that span reads TGG.

Belongs to the glycosyltransferase 28 family. MurG subfamily.

The protein resides in the cell inner membrane. It carries out the reaction di-trans,octa-cis-undecaprenyl diphospho-N-acetyl-alpha-D-muramoyl-L-alanyl-D-glutamyl-meso-2,6-diaminopimeloyl-D-alanyl-D-alanine + UDP-N-acetyl-alpha-D-glucosamine = di-trans,octa-cis-undecaprenyl diphospho-[N-acetyl-alpha-D-glucosaminyl-(1-&gt;4)]-N-acetyl-alpha-D-muramoyl-L-alanyl-D-glutamyl-meso-2,6-diaminopimeloyl-D-alanyl-D-alanine + UDP + H(+). Its pathway is cell wall biogenesis; peptidoglycan biosynthesis. In terms of biological role, cell wall formation. Catalyzes the transfer of a GlcNAc subunit on undecaprenyl-pyrophosphoryl-MurNAc-pentapeptide (lipid intermediate I) to form undecaprenyl-pyrophosphoryl-MurNAc-(pentapeptide)GlcNAc (lipid intermediate II). The protein is UDP-N-acetylglucosamine--N-acetylmuramyl-(pentapeptide) pyrophosphoryl-undecaprenol N-acetylglucosamine transferase of Helicobacter pylori (strain P12).